The chain runs to 149 residues: General odorant-binding protein 99b (149 aa).

The N-terminal stretch at 1-16 is a signal peptide; that stretch reads MKVLIVLLLGLAFVLA. Cystine bridges form between Cys40–Cys71, Cys67–Cys125, and Cys114–Cys134.

This sequence belongs to the PBP/GOBP family. Expressed in adult olfactory system. Expressed in subsets of sensilla in both olfactory organs, the maxillary palps, and third antennal segments.

The protein resides in the secreted. In terms of biological role, present in the aqueous fluid surrounding olfactory sensory dendrites and are thought to aid in the capture and transport of hydrophobic odorants into and through this fluid. The sequence is that of General odorant-binding protein 99b (Obp99b) from Drosophila melanogaster (Fruit fly).